Consider the following 202-residue polypeptide: GTP-binding protein rho1 (202 aa).

Residue 13-20 participates in GTP binding; that stretch reads GDGACGKT. The Effector region motif lies at 35–43; that stretch reads YVPTVFENY. Residues 60–64 and 118–121 contribute to the GTP site; these read DTAGQ and CKAD. Cysteine methyl ester is present on Cys-199. Cys-199 is lipidated: S-geranylgeranyl cysteine. A propeptide spans 200–202 (removed in mature form); sequence ILL.

The protein belongs to the small GTPase superfamily. Rho family.

It localises to the cell membrane. Involved in the regulation of cell wall growth and actin cytoskeleton organization. Activates (1,3)-beta-D-glucan synthase. In Schizosaccharomyces pombe (strain 972 / ATCC 24843) (Fission yeast), this protein is GTP-binding protein rho1 (rho1).